Here is a 212-residue protein sequence, read N- to C-terminus: MFLDELISEFDRGLRSMTGVSRMSRPLPVPQESKVTEPAVELSPAERAHAAGLMRVNHVGEVCAQALYQAQKLATKSPSLRAVFDRAAIEEEDHLAWTSKRLEALDSRPSLLNPLWYTGALAIGLAAGRMGDRVSLGFMAETERQVELHLDSHLDELPAADHESRAIVEQMRVDEAEHGKAAMEAGGLELPFPARALMRAVSKVMTRTAYYI.

The Fe cation site is built by Glu-61, Glu-91, His-94, Glu-143, Glu-175, and His-178.

Belongs to the COQ7 family. Requires Fe cation as cofactor.

It is found in the cell membrane. It carries out the reaction a 5-methoxy-2-methyl-3-(all-trans-polyprenyl)benzene-1,4-diol + AH2 + O2 = a 3-demethylubiquinol + A + H2O. The protein operates within cofactor biosynthesis; ubiquinone biosynthesis. Its function is as follows. Catalyzes the hydroxylation of 2-nonaprenyl-3-methyl-6-methoxy-1,4-benzoquinol during ubiquinone biosynthesis. The protein is 3-demethoxyubiquinol 3-hydroxylase of Paraburkholderia phytofirmans (strain DSM 17436 / LMG 22146 / PsJN) (Burkholderia phytofirmans).